The chain runs to 522 residues: Flavin-dependent halogenase armH1 (522 aa).

3 residues coordinate FAD: Gly16, Ala19, and Glu49. Chloride is bound by residues Ser328 and Gly329. Residue Ile330 participates in FAD binding.

Belongs to the flavin-dependent halogenase family.

The catalysed reaction is melleolide F + FADH2 + chloride + O2 = 6'-chloromelleolide F + FAD + 2 H2O + H(+). Its function is as follows. Flavin-dependent halogenase involved in the biosynthesis of melleolides, a range of antifungal and phytotoxic polyketide derivatives composed of an orsellinic acid (OA) moiety esterified to various sesquiterpene alcohols. The halogenase catalyzes the transfer of a single chlorine atom to the melleolide backbone, resulting in a 6'-chloromelleolide product. The enzyme acts on free substrate and does not depend on carrier-protein-dependent acceptor molecules. The protein is Flavin-dependent halogenase armH1 of Armillaria mellea (Honey mushroom).